The primary structure comprises 1029 residues: Carbamoyl phosphate synthase large chain (1029 aa).

The segment at 1–402 (MPKRTDLQTI…SLQKALRSTE (402 aa)) is carboxyphosphate synthetic domain. ATP-binding residues include arginine 129, arginine 169, glycine 175, glycine 176, glutamate 208, isoleucine 210, glutamate 215, glycine 241, valine 242, histidine 243, glutamine 285, and glutamate 299. An ATP-grasp 1 domain is found at 133–328 (QAAMKKIGVE…IAKIAALLAV (196 aa)). The Mg(2+) site is built by glutamine 285, glutamate 299, and asparagine 301. The Mn(2+) site is built by glutamine 285, glutamate 299, and asparagine 301. Positions 403-546 (SDVRGAFAEM…YSTYEWEDEV (144 aa)) are oligomerization domain. The interval 547-929 (TPTDKPKVVI…AYYRAELGAK (383 aa)) is carbamoyl phosphate synthetic domain. Residues 671-863 (NALCERLGLP…LAKYAARIAV (193 aa)) form the ATP-grasp 2 domain. ATP-binding residues include arginine 707, glutamine 747, leucine 749, glutamate 754, glycine 779, valine 780, histidine 781, serine 782, glutamine 822, and glutamate 834. The Mg(2+) site is built by glutamine 822, glutamate 834, and asparagine 836. Mn(2+) is bound by residues glutamine 822, glutamate 834, and asparagine 836. The MGS-like domain occupies 930–1028 (SNLPLSGTAL…QAWQQREAAA (99 aa)). Residues 930 to 1029 (SNLPLSGTAL…AWQQREAAAS (100 aa)) form an allosteric domain region.

This sequence belongs to the CarB family. Composed of two chains; the small (or glutamine) chain promotes the hydrolysis of glutamine to ammonia, which is used by the large (or ammonia) chain to synthesize carbamoyl phosphate. Tetramer of heterodimers (alpha,beta)4. The cofactor is Mg(2+). Mn(2+) serves as cofactor.

It carries out the reaction hydrogencarbonate + L-glutamine + 2 ATP + H2O = carbamoyl phosphate + L-glutamate + 2 ADP + phosphate + 2 H(+). It catalyses the reaction hydrogencarbonate + NH4(+) + 2 ATP = carbamoyl phosphate + 2 ADP + phosphate + 2 H(+). Its pathway is amino-acid biosynthesis; L-arginine biosynthesis; carbamoyl phosphate from bicarbonate: step 1/1. It functions in the pathway pyrimidine metabolism; UMP biosynthesis via de novo pathway; (S)-dihydroorotate from bicarbonate: step 1/3. In terms of biological role, large subunit of the glutamine-dependent carbamoyl phosphate synthetase (CPSase). CPSase catalyzes the formation of carbamoyl phosphate from the ammonia moiety of glutamine, carbonate, and phosphate donated by ATP, constituting the first step of 2 biosynthetic pathways, one leading to arginine and/or urea and the other to pyrimidine nucleotides. The large subunit (synthetase) binds the substrates ammonia (free or transferred from glutamine from the small subunit), hydrogencarbonate and ATP and carries out an ATP-coupled ligase reaction, activating hydrogencarbonate by forming carboxy phosphate which reacts with ammonia to form carbamoyl phosphate. This Deinococcus geothermalis (strain DSM 11300 / CIP 105573 / AG-3a) protein is Carbamoyl phosphate synthase large chain.